A 541-amino-acid polypeptide reads, in one-letter code: Glucose-6-phosphate isomerase (541 aa).

The Proton donor role is filled by E346. Active-site residues include H377 and K506.

The protein belongs to the GPI family.

Its subcellular location is the cytoplasm. It carries out the reaction alpha-D-glucose 6-phosphate = beta-D-fructose 6-phosphate. It participates in carbohydrate biosynthesis; gluconeogenesis. Its pathway is carbohydrate degradation; glycolysis; D-glyceraldehyde 3-phosphate and glycerone phosphate from D-glucose: step 2/4. Functionally, catalyzes the reversible isomerization of glucose-6-phosphate to fructose-6-phosphate. The polypeptide is Glucose-6-phosphate isomerase (Rhizobium etli (strain ATCC 51251 / DSM 11541 / JCM 21823 / NBRC 15573 / CFN 42)).